The primary structure comprises 129 residues: MDINPLLYLQAFNNDATTFNTQGHILEQQSDSPYFDTFANAMQAYLDTKQGGNDEEGTIILMDDEDFNDSESLEDFLQMLNEEELNDGFSSDDEPEEHVILTEDNQGEPSETPQATFDITEFIKTEDED.

Residues 86–96 are compositionally biased toward acidic residues; it reads NDGFSSDDEPE. The interval 86 to 129 is disordered; that stretch reads NDGFSSDDEPEEHVILTEDNQGEPSETPQATFDITEFIKTEDED. Polar residues predominate over residues 103–117; that stretch reads EDNQGEPSETPQATF.

Belongs to the asfivirus D129L family.

This is an uncharacterized protein from African swine fever virus (isolate Tick/South Africa/Pretoriuskop Pr4/1996) (ASFV).